A 216-amino-acid polypeptide reads, in one-letter code: Pyrophosphatase PpaX (216 aa).

Residue D9 is the Nucleophile of the active site.

Belongs to the HAD-like hydrolase superfamily. PpaX family. Requires Mg(2+) as cofactor.

The enzyme catalyses diphosphate + H2O = 2 phosphate + H(+). Hydrolyzes pyrophosphate formed during P-Ser-HPr dephosphorylation by HPrK/P. Might play a role in controlling the intracellular pyrophosphate pool. This is Pyrophosphatase PpaX from Bacillus cereus (strain ATCC 10987 / NRS 248).